We begin with the raw amino-acid sequence, 120 residues long: UPF0102 protein TW312 (120 aa).

It belongs to the UPF0102 family.

In Tropheryma whipplei (strain TW08/27) (Whipple's bacillus), this protein is UPF0102 protein TW312.